A 259-amino-acid chain; its full sequence is MASPQGGQIAIAMRLRNQLQSVYKMDPLRNEEEVRVKIKDLNEHIVCCLCAGYFVDATTITECLHTFCKSCIVKYLQTSKYCPMCNIKIHETQPLLNLKLDRVMQDIVYKLVPGLQDSEEKRIREFYQSRGLDRVSQPSGEEPALSNLGLPFSSFDHSKAHYYRYDEQLSLCLERLSSGKDKNKNVLQNKYVRCSVRAEVRHLRRVLCHRLMLNPQHVQLLFDNEVLPDHMTMKQLWLSRWFGKPSPLLLQYSVKEKRR.

At alanine 2 the chain carries N-acetylalanine. Phosphoserine is present on serine 3. Residue lysine 24 forms a Glycyl lysine isopeptide (Lys-Gly) (interchain with G-Cter in SUMO2) linkage. The segment at 47–86 (CCLCAGYFVDATTITECLHTFCKSCIVKYLQTSKYCPMCN) adopts an RING-type zinc-finger fold. The segment at 86-247 (NIKIHETQPL…LSRWFGKPSP (162 aa)) is necessary for repressor activity. Residue lysine 88 forms a Glycyl lysine isopeptide (Lys-Gly) (interchain with G-Cter in SUMO2) linkage. The interval 150-255 (LPFSSFDHSK…SPLLLQYSVK (106 aa)) is required for the interaction with the KDM2B-SKP1 heterodimeric complex. The interval 167–255 (EQLSLCLERL…SPLLLQYSVK (89 aa)) is RING-finger and WD40-associated ubiquitin-like domain (RAWUL); sufficient for interaction with BCOR and BCORL1.

Interacts with BCORL1, forming heterodimers. The PCGF1-BCORL1 heterodimeric complex interacts with the KDM2B-SKP1 heterodimeric complex to form a homotetrameric polycomb repression complex 1 (PRC1.1). Component of the repressive BCOR complex containing a Polycomb group subcomplex at least composed of RYBP, RING1 and RNF2/RING2. Specifically interacts with BCOR, RING1 and RNF2/RING2. Component of a PRC1-like complex. Interacts with CBX6, CBX7 and CBX8. Interacts with DPPA4, NANOG, POU5F1 and RYBP.

The protein localises to the nucleus. Component of the Polycomb group (PcG) multiprotein BCOR complex, a complex required to maintain the transcriptionally repressive state of some genes, such as BCL6 and the cyclin-dependent kinase inhibitor, CDKN1A. Transcriptional repressor that may be targeted to the DNA by BCL6; this transcription repressor activity may be related to PKC signaling pathway. Represses CDKN1A expression by binding to its promoter, and this repression is dependent on the retinoic acid response element (RARE element). Promotes cell cycle progression and enhances cell proliferation as well. May have a positive role in tumor cell growth by down-regulating CDKN1A. Component of a Polycomb group (PcG) multiprotein PRC1-like complex, a complex class required to maintain the transcriptionally repressive state of many genes, including Hox genes, throughout development. PcG PRC1 complex acts via chromatin remodeling and modification of histones; it mediates monoubiquitination of histone H2A 'Lys-119', rendering chromatin heritably changed in its expressibility. Within the PRC1-like complex, regulates RNF2 ubiquitin ligase activity. Regulates the expression of DPPA4 and NANOG in the NT2 embryonic carcinoma cells. This chain is Polycomb group RING finger protein 1 (Pcgf1), found in Mus musculus (Mouse).